Reading from the N-terminus, the 161-residue chain is ATP synthase subunit b (161 aa).

Residues 11 to 31 (AISFVLFVWFCMKYIWPPIIL) traverse the membrane as a helical segment.

The protein belongs to the ATPase B chain family. In terms of assembly, F-type ATPases have 2 components, F(1) - the catalytic core - and F(0) - the membrane proton channel. F(1) has five subunits: alpha(3), beta(3), gamma(1), delta(1), epsilon(1). F(0) has three main subunits: a(1), b(2) and c(10-14). The alpha and beta chains form an alternating ring which encloses part of the gamma chain. F(1) is attached to F(0) by a central stalk formed by the gamma and epsilon chains, while a peripheral stalk is formed by the delta and b chains.

It localises to the cell membrane. F(1)F(0) ATP synthase produces ATP from ADP in the presence of a proton or sodium gradient. F-type ATPases consist of two structural domains, F(1) containing the extramembraneous catalytic core and F(0) containing the membrane proton channel, linked together by a central stalk and a peripheral stalk. During catalysis, ATP synthesis in the catalytic domain of F(1) is coupled via a rotary mechanism of the central stalk subunits to proton translocation. Functionally, component of the F(0) channel, it forms part of the peripheral stalk, linking F(1) to F(0). This Buchnera aphidicola subsp. Acyrthosiphon pisum (strain APS) (Acyrthosiphon pisum symbiotic bacterium) protein is ATP synthase subunit b.